The following is a 601-amino-acid chain: DDB1- and CUL4-associated factor 8 (601 aa).

Composition is skewed to polar residues over residues 1–24 (MSFS…SSPE) and 46–60 (VSLS…TTQA). The disordered stretch occupies residues 1–150 (MSFSGEMSNG…DWLISEKTPL (150 aa)). Positions 39-50 (IEVEASDVSLSL) match the Nuclear export signal motif. Residues 61–99 (ESRDSCSETSGEDKDSDSMDDTGHYSINDENRGNDQSHS) are compositionally biased toward basic and acidic residues. A coiled-coil region spans residues 94-131 (NDQSHSEDEEEEEEEDEEEEAVRHRKRAQRKRANRDQE). Residues 100 to 113 (EDEEEEEEEDEEEE) are compositionally biased toward acidic residues. A compositionally biased stretch (basic residues) spans 116–126 (RHRKRAQRKRA). Positions 127–140 (NRDQESSDEERALD) are enriched in basic and acidic residues. WD repeat units lie at residues 194–233 (GHSG…PVLE), 237–278 (GHKS…CCKN), 284–324 (QHKG…PASR), 332–372 (ESKV…ENVN), 388–427 (EAKA…GAEY), 435–475 (RNNA…IVQF), and 479–519 (DKGG…TELD). The tract at residues 561–601 (RRRRRDAGLGAGDAESDDSPSSSDSSDDDEDGPDRVQCIPS) is disordered.

It belongs to the WD repeat DCAF8 family.

Its subcellular location is the nucleus. The protein localises to the cytoplasm. This chain is DDB1- and CUL4-associated factor 8 (dcaf8), found in Xenopus laevis (African clawed frog).